We begin with the raw amino-acid sequence, 298 residues long: MSRSLEGKFAIITGGSRGIGEAIAHNLASKGCSLLLNYTSDSSRTRTESLCNTLSTTHKITCIPVQADLSDPAPAVNTIISAAKTHFTSPTTNTLTIDILINNAGVSKDRFLNDPSSGPIDPAYFNWHYTINVLAPLLLTQACAEYLPRKPAHSGRIINISSISSSLGFTGQSVYGGTKAALEAMTRTWARELADVATVNAVNPGPVVGDMYFATGEEFWKQMQGFQDNTPLSKLVDGEEAVEELLSEEQKRLIREKMGGRRPAFTREIAGVVGMLCTEDGAWCTGSVVCANGGLKFT.

NADP(+)-binding residues include Ile19, Asp68, and Asn103. Active-site proton donor residues include Ser161, Ser162, and Tyr175. Positions 175, 179, and 207 each coordinate NADP(+). Lys179 acts as the Lowers pKa of active site Tyr in catalysis.

It belongs to the short-chain dehydrogenases/reductases (SDR) family.

The catalysed reaction is xylitol + NADP(+) = L-xylulose + NADPH + H(+). The protein operates within carbohydrate degradation; L-arabinose degradation via L-arabinitol; D-xylulose 5-phosphate from L-arabinose (fungal route): step 3/5. Its function is as follows. L-xylulose reductase involved in the catabolism of L-arabinose through an oxidoreductive pathway. Catalyzes the NADPH-dependent reduction of L-xylulose. The polypeptide is L-xylulose reductase (Aspergillus niger (strain ATCC 1015 / CBS 113.46 / FGSC A1144 / LSHB Ac4 / NCTC 3858a / NRRL 328 / USDA 3528.7)).